Consider the following 260-residue polypeptide: BTB/POZ domain-containing protein KCTD21 (260 aa).

Positions 3–72 constitute a BTB domain; the sequence is DPITLNVGGK…LRTSHLDLPE (70 aa). The stretch at 88 to 112 forms a coiled coil; that stretch reads QVQPLIEALQEKEVELSKAEKNAML.

As to quaternary structure, homopentamer. Interacts with KCTD11; KCTD21 and KCTD11 may associate in pentameric assemblies. Interacts (via BTB domain) with CUL3; indicative for a participation in a BCR (BTB-CUL3-RBX1) E3 ubiquitin-protein ligase complex. In terms of tissue distribution, highly expressed in cerebellum and brain. Expressed in adult cerebellum (at protein level).

Its pathway is protein modification; protein ubiquitination. Functionally, probable substrate-specific adapter of a BCR (BTB-CUL3-RBX1) E3 ubiquitin-protein ligase complex mediating the ubiquitination and subsequent proteasomal degradation of target proteins. Promotes the ubiquitination of HDAC1. Can function as antagonist of the Hedgehog pathway by affecting the nuclear transfer of transcription factor GLI1; the function probably occurs via HDAC1 down-regulation, keeping GLI1 acetylated and inactive. Inhibits cell growth and tumorigenicity of medulloblastoma (MDB). This chain is BTB/POZ domain-containing protein KCTD21 (Kctd21), found in Mus musculus (Mouse).